The sequence spans 124 residues: Small ribosomal subunit protein uS12 (124 aa).

A 3-methylthioaspartic acid modification is found at aspartate 89.

This sequence belongs to the universal ribosomal protein uS12 family. As to quaternary structure, part of the 30S ribosomal subunit. Contacts proteins S8 and S17. May interact with IF1 in the 30S initiation complex.

Functionally, with S4 and S5 plays an important role in translational accuracy. Its function is as follows. Interacts with and stabilizes bases of the 16S rRNA that are involved in tRNA selection in the A site and with the mRNA backbone. Located at the interface of the 30S and 50S subunits, it traverses the body of the 30S subunit contacting proteins on the other side and probably holding the rRNA structure together. The combined cluster of proteins S8, S12 and S17 appears to hold together the shoulder and platform of the 30S subunit. In Prochlorococcus marinus (strain SARG / CCMP1375 / SS120), this protein is Small ribosomal subunit protein uS12.